The following is a 305-amino-acid chain: Nuclear egress protein 1 (305 aa).

Basic and acidic residues predominate over residues Met-1–Glu-11. A disordered region spans residues Met-1–Lys-24. Residues Cys-104–His-230 form a CCCH-type zinc finger.

It belongs to the herpesviridae NEC1 protein family. In terms of assembly, forms a heterohexameric complex with NEC2. Interacts with capsid vertex specific component 2/CVC2; this interaction directs the capsid to the host inner nuclear membrane to initiate budding. In terms of processing, phosphorylated at serine residues in the N-terminus. This phosphorylation regulates the localization within the inner nuclear membrane.

The protein localises to the host nucleus inner membrane. Its function is as follows. Plays an essential role in virion nuclear egress, the first step of virion release from infected cell. Within the host nucleus, NEC1 interacts with the newly formed capsid through the vertexes and directs it to the inner nuclear membrane by associating with NEC2. Induces the budding of the capsid at the inner nuclear membrane as well as its envelopment into the perinuclear space. There, the NEC1/NEC2 complex promotes the fusion of the enveloped capsid with the outer nuclear membrane and the subsequent release of the viral capsid into the cytoplasm where it will reach the secondary budding sites in the host Golgi or trans-Golgi network. This chain is Nuclear egress protein 1, found in Equus caballus (Horse).